We begin with the raw amino-acid sequence, 308 residues long: Cytochrome b (308 aa).

Transmembrane regions (helical) follow at residues 1–21 (FGLL…LLAA), 45–66 (WLIR…YLHI), 81–101 (WNIG…GYVX), and 146–166 (FFAL…VHLT). The heme b site is built by His-51 and His-65. Residues His-150 and His-164 each coordinate heme b. An a ubiquinone-binding site is contributed by His-169. 3 helical membrane-spanning segments follow: residues 194–214 (TKDV…ALFS), 256–276 (LGGV…PFLH), and 288–308 (LSQI…WVSN).

Belongs to the cytochrome b family. The cytochrome bc1 complex contains 11 subunits: 3 respiratory subunits (MT-CYB, CYC1 and UQCRFS1), 2 core proteins (UQCRC1 and UQCRC2) and 6 low-molecular weight proteins (UQCRH/QCR6, UQCRB/QCR7, UQCRQ/QCR8, UQCR10/QCR9, UQCR11/QCR10 and a cleavage product of UQCRFS1). This cytochrome bc1 complex then forms a dimer. The cofactor is heme b.

It localises to the mitochondrion inner membrane. Functionally, component of the ubiquinol-cytochrome c reductase complex (complex III or cytochrome b-c1 complex) that is part of the mitochondrial respiratory chain. The b-c1 complex mediates electron transfer from ubiquinol to cytochrome c. Contributes to the generation of a proton gradient across the mitochondrial membrane that is then used for ATP synthesis. The chain is Cytochrome b (MT-CYB) from Pomatostomus ruficeps (Chestnut-crowned babbler).